The sequence spans 266 residues: Sesquipedalian-1 (266 aa).

Residues 17 to 113 (PVDNAGFLYK…WVKALSRASF (97 aa)) form the PH domain. Residues 165–184 (QPSVAPQRPPPLPPRRRASA) are disordered. A Phosphoserine modification is found at Ser183. The short motif at 191–203 (SFAQLHARYGLEV) is the F&amp;H element.

It belongs to the sesquipedalian family. As to quaternary structure, forms homodimers and heterodimers with PHETA2. Interacts with OCRL and INPP5B. Interaction with OCRL may be important for endosomal morphology and function.

Its subcellular location is the early endosome. The protein resides in the recycling endosome. It localises to the golgi apparatus. The protein localises to the trans-Golgi network. It is found in the cytoplasmic vesicle. Its subcellular location is the clathrin-coated vesicle. Its function is as follows. Plays a role in endocytic trafficking. Required for receptor recycling from endosomes, both to the trans-Golgi network and the plasma membrane. In Mus musculus (Mouse), this protein is Sesquipedalian-1.